Reading from the N-terminus, the 294-residue chain is Nucleoside-specific channel-forming protein Tsx (294 aa).

A signal peptide spans 1 to 22 (MKKTLLAAGAVLALSSSFTVNA).

This sequence belongs to the nucleoside-specific channel-forming outer membrane porin (Tsx) (TC 1.B.10) family.

Its subcellular location is the cell outer membrane. Functionally, functions as a substrate-specific channel for nucleosides and deoxynucleosides. The protein is Nucleoside-specific channel-forming protein Tsx (tsx) of Escherichia coli O157:H7.